An 80-amino-acid polypeptide reads, in one-letter code: Acyl carrier protein (80 aa).

One can recognise a Carrier domain in the interval 2 to 77; it reads KNIEERIKKI…KSIDFIQKKN (76 aa). Ser37 is modified (O-(pantetheine 4'-phosphoryl)serine).

The protein belongs to the acyl carrier protein (ACP) family. In terms of processing, 4'-phosphopantetheine is transferred from CoA to a specific serine of apo-ACP by AcpS. This modification is essential for activity because fatty acids are bound in thioester linkage to the sulfhydryl of the prosthetic group.

The protein resides in the cytoplasm. It functions in the pathway lipid metabolism; fatty acid biosynthesis. Functionally, carrier of the growing fatty acid chain in fatty acid biosynthesis. The protein is Acyl carrier protein of Buchnera aphidicola subsp. Acyrthosiphon pisum (strain APS) (Acyrthosiphon pisum symbiotic bacterium).